We begin with the raw amino-acid sequence, 140 residues long: Large ribosomal subunit protein uL16 (140 aa).

It belongs to the universal ribosomal protein uL16 family. In terms of assembly, part of the 50S ribosomal subunit.

In terms of biological role, binds 23S rRNA and is also seen to make contacts with the A and possibly P site tRNAs. This is Large ribosomal subunit protein uL16 from Syntrophus aciditrophicus (strain SB).